The primary structure comprises 367 residues: Avirulence protein ATR5 (367 aa).

An N-terminal signal peptide occupies residues 1–16 (MRLISPALVVSTAIQA). Asn20 carries N-linked (GlcNAc...) asparagine glycosylation. Positions 33 to 65 (NPLASAHPPDVGYDGVPAGRVRNPDDPTTEERT) are disordered. Residues 54–65 (RNPDDPTTEERT) are compositionally biased toward basic and acidic residues. Positions 61–64 (TEER) match the dEER motif.

This sequence belongs to the RxLR effector family.

It is found in the secreted. The protein resides in the host cell. Secreted effector that acts as an elicitor of hypersensitive response (HR) specifically on plants carrying defense protein RPP5. This is Avirulence protein ATR5 from Hyaloperonospora arabidopsidis (strain Emoy2) (Downy mildew agent).